We begin with the raw amino-acid sequence, 613 residues long: Myosin light chain kinase 2, skeletal/cardiac muscle (613 aa).

Positions 1–20 are enriched in polar residues; the sequence is MTTENGAVELGSQSLSTEQT. The disordered stretch occupies residues 1-168; the sequence is MTTENGAVEL…RGSPAFLHSP (168 aa). Positions 32 to 55 are enriched in basic and acidic residues; the sequence is SEKEPSAPATEKDLSPPNAKKDPG. Positions 56–66 are enriched in pro residues; that stretch reads APDPKNNPDPP. Residues 67–83 show a composition bias toward basic and acidic residues; it reads SLKKDPAKAPGPEKKGD. A compositionally biased stretch (gly residues) spans 95-105; that stretch reads SGEGDGGGGPA. Residues 106-122 are compositionally biased toward low complexity; sequence EGSEGPPAALPLPTATA. Over residues 145–158 the composition is skewed to basic and acidic residues; sequence KAGKKAAECREAGR. 3 positions are modified to phosphoserine: S161, S167, and S169. The tract at residues 219–240 is disordered; sequence EKKKEEAEKASGQAGQAKVQGD. The 256-residue stretch at 302-557 folds into the Protein kinase domain; that stretch reads MNSKEALGGG…AEQCLAHPWL (256 aa). ATP is bound by residues 308-316 and K331; that span reads LGGGKFGAV. D423 serves as the catalytic Proton acceptor. T462 carries the post-translational modification Phosphothreonine. The tract at residues 591–603 is calmodulin-binding; sequence IAVSAANRFKKIS.

This sequence belongs to the protein kinase superfamily. CAMK Ser/Thr protein kinase family. In terms of assembly, may interact with centrin.

The protein resides in the cytoplasm. It carries out the reaction L-seryl-[myosin light chain] + ATP = O-phospho-L-seryl-[myosin light chain] + ADP + H(+). The enzyme catalyses L-threonyl-[myosin light chain] + ATP = O-phospho-L-threonyl-[myosin light chain] + ADP + H(+). Functionally, implicated in the level of global muscle contraction and cardiac function. Phosphorylates a specific serine in the N-terminus of a myosin light chain. The polypeptide is Myosin light chain kinase 2, skeletal/cardiac muscle (Mylk2) (Mus musculus (Mouse)).